We begin with the raw amino-acid sequence, 90 residues long: Small ribosomal subunit protein uS15c (90 aa).

It belongs to the universal ribosomal protein uS15 family. As to quaternary structure, part of the 30S ribosomal subunit.

It is found in the plastid. It localises to the chloroplast. The protein is Small ribosomal subunit protein uS15c (rps15) of Phaseolus vulgaris (Kidney bean).